The primary structure comprises 944 residues: Putative ATP-dependent RNA helicase (944 aa).

The Helicase ATP-binding domain occupies 66–235 (TTPRSPIDGI…VPLHNLLMKL (170 aa)). Residue 79-86 (HGVGTGKT) participates in ATP binding. The DEAH box motif lies at 183 to 186 (DEAH). In terms of domain architecture, Helicase C-terminal spans 451–523 (CLTREVMTVP…QIIGRGIRYQ (73 aa)).

The protein belongs to the DEAD box helicase family. DEAH subfamily.

It carries out the reaction ATP + H2O = ADP + phosphate + H(+). The sequence is that of Putative ATP-dependent RNA helicase from Heliothis virescens ascovirus 3e (HvAV-3e).